A 416-amino-acid polypeptide reads, in one-letter code: Lactose permease (416 aa).

Over methionine 1 to glycine 13 the chain is Cytoplasmic. A helical transmembrane segment spans residues phenylalanine 14–leucine 34. Topologically, residues histidine 35 to threonine 45 are periplasmic. The helical transmembrane segment at glycine 46–leucine 66 threads the bilayer. The Cytoplasmic portion of the chain corresponds to serine 67–histidine 75. A helical membrane pass occupies residues leucine 76 to glycine 96. Position 97 (proline 97) is a topological domain, periplasmic. A helical membrane pass occupies residues leucine 98–tyrosine 118. Residues asparagine 119 to arginine 144 are Cytoplasmic-facing. Residues methionine 145–asparagine 165 traverse the membrane as a helical segment. Residue asparagine 166 is a topological domain, periplasmic. Residues glutamine 167 to serine 187 form a helical membrane-spanning segment. At lysine 188–lysine 211 the chain is on the cytoplasmic side. A helical membrane pass occupies residues leucine 212 to valine 232. Residues serine 233–glycine 262 lie on the Periplasmic side of the membrane. The chain crosses the membrane as a helical span at residues tyrosine 263–valine 283. Topologically, residues asparagine 284–asparagine 290 are cytoplasmic. A helical transmembrane segment spans residues alanine 291 to histidine 309. The Periplasmic segment spans residues threonine 310–valine 314. A helical transmembrane segment spans residues valine 315–isoleucine 336. The Cytoplasmic portion of the chain corresponds to threonine 337–threonine 347. Residues isoleucine 348 to alanine 368 form a helical membrane-spanning segment. Over glycine 369 to glutamine 378 the chain is Periplasmic. The chain crosses the membrane as a helical span at residues glycine 379–leucine 399. Topologically, residues serine 400–leucine 416 are cytoplasmic.

Belongs to the major facilitator superfamily. Oligosaccharide:H(+) symporter (OHS) (TC 2.A.1.5) family.

The protein localises to the cell inner membrane. The catalysed reaction is lactose(in) + H(+)(in) = lactose(out) + H(+)(out). Its function is as follows. Responsible for transport of beta-galactosides into the cell, with the concomitant import of a proton (symport system). The protein is Lactose permease (lacY) of Citrobacter freundii.